A 522-amino-acid polypeptide reads, in one-letter code: E3 ubiquitin-protein ligase DMA2 (522 aa).

2 disordered regions span residues 1–56 (MYTP…RPAS) and 69–92 (QNSQ…PSNS). Low complexity predominate over residues 14 to 35 (APTSSMTSNSSSASNANTTSSS). A compositionally biased stretch (polar residues) spans 36-49 (GINPRNRASGTPSN). Ser-206 is subject to Phosphoserine. Residues Lys-211, Lys-256, Lys-258, Lys-288, Lys-310, Lys-333, Lys-343, Lys-346, Lys-366, Lys-406, Lys-412, and Lys-423 each participate in a glycyl lysine isopeptide (Lys-Gly) (interchain with G-Cter in ubiquitin) cross-link. The 64-residue stretch at 295 to 358 (LVIGRYTERV…SGTFLNHQRL (64 aa)) folds into the FHA domain. The segment at 433–477 (CSICLCKIKPCQAIFISPCAHSWHFRCVRRLVMLSYPQFVCPNCR) adopts an RING-type; atypical zinc-finger fold.

Belongs to the DMA1 family. UBC4-dependent autoubiquitination occurs at Lys-211, Lys-258, Lys-288, Lys-310, Lys-333, Lys-343, Lys-346, Lys-366, Lys-406, Lys-412 and Lys-423. UBC13/MMS2-dependent autoubiquitination occurs at Lys-258, Lys-310, Lys-346 and Lys-366. Lys-211, Lys-256, Lys-288, Lys-310, Lys-343, Lys-258, Lys-366 and Lys-412 are also ubiquitinated in trans by DMA1 E3 ligase in association with UBC4.

The protein resides in the cytoplasm. The catalysed reaction is S-ubiquitinyl-[E2 ubiquitin-conjugating enzyme]-L-cysteine + [acceptor protein]-L-lysine = [E2 ubiquitin-conjugating enzyme]-L-cysteine + N(6)-ubiquitinyl-[acceptor protein]-L-lysine.. Its function is as follows. E3 ubiquitin-protein ligase which functions in cell cycle retarding in conjunction with the UBC4 and UBC13/MMS2 complex, 2 E2 ubiquitin conjugating enzymes. Involved in nutritional control of the cell cycle. Required for proper spindle positioning, likely regulating septin ring deposition at the bud neck. This is E3 ubiquitin-protein ligase DMA2 (DMA2) from Saccharomyces cerevisiae (strain YJM789) (Baker's yeast).